A 437-amino-acid polypeptide reads, in one-letter code: Eukaryotic peptide chain release factor subunit 1 (437 aa).

The NIKS motif; plays an important role in translational termination signature appears at 61 to 64 (NIKS).

The protein belongs to the eukaryotic release factor 1 family. Component of the eRF1-eRF3-GTP ternary complex, composed of ETF1/ERF1 and eRF3 (GSPT1/ERF3A or GSPT2/ERF3B) and GTP.

It localises to the cytoplasm. In terms of biological role, component of the eRF1-eRF3-GTP ternary complex, a ternary complex that mediates translation termination in response to the termination codons. The eRF1-eRF3-GTP complex binds to a stop codon in the ribosomal A-site. ETF1/ERF1 is responsible for stop codon recognition and inducing hydrolysis of peptidyl-tRNA. Following GTP hydrolysis, eRF3 (GSPT1/ERF3A or GSPT2/ERF3B) dissociates, permitting ETF1/eRF1 to accommodate fully in the A-site, followed by hydrolysis of peptidyl-tRNA. The protein is Eukaryotic peptide chain release factor subunit 1 (etf1) of Xenopus laevis (African clawed frog).